A 212-amino-acid chain; its full sequence is MEENFFKLILITNKQQISVEEYLDFVCACVQSGVTSVQLREKELSYRELLGFGEALKSILDPLEIPLIVSDSVSVCLDLDATGVHLGQTDGDVIEARELLGSDKIIGWNVNTLDQLLNANTLPIDYLGLSAMFATQNKPDATNLWGFSGLEQAVSLCEHPIVAIGGIDESNASKVIDAGAAGIAAIGVFHSAQNPSSVTKALREIVDRGLRC.

Position 38-42 (38-42 (QLREK)) interacts with 4-amino-2-methyl-5-(diphosphooxymethyl)pyrimidine. Mg(2+) is bound by residues D71 and D90. A 4-amino-2-methyl-5-(diphosphooxymethyl)pyrimidine-binding site is contributed by K138. Residue G166 coordinates 2-[(2R,5Z)-2-carboxy-4-methylthiazol-5(2H)-ylidene]ethyl phosphate.

Belongs to the thiamine-phosphate synthase family. Mg(2+) serves as cofactor.

It carries out the reaction 2-[(2R,5Z)-2-carboxy-4-methylthiazol-5(2H)-ylidene]ethyl phosphate + 4-amino-2-methyl-5-(diphosphooxymethyl)pyrimidine + 2 H(+) = thiamine phosphate + CO2 + diphosphate. The catalysed reaction is 2-(2-carboxy-4-methylthiazol-5-yl)ethyl phosphate + 4-amino-2-methyl-5-(diphosphooxymethyl)pyrimidine + 2 H(+) = thiamine phosphate + CO2 + diphosphate. It catalyses the reaction 4-methyl-5-(2-phosphooxyethyl)-thiazole + 4-amino-2-methyl-5-(diphosphooxymethyl)pyrimidine + H(+) = thiamine phosphate + diphosphate. It participates in cofactor biosynthesis; thiamine diphosphate biosynthesis; thiamine phosphate from 4-amino-2-methyl-5-diphosphomethylpyrimidine and 4-methyl-5-(2-phosphoethyl)-thiazole: step 1/1. In terms of biological role, condenses 4-methyl-5-(beta-hydroxyethyl)thiazole monophosphate (THZ-P) and 2-methyl-4-amino-5-hydroxymethyl pyrimidine pyrophosphate (HMP-PP) to form thiamine monophosphate (TMP). The protein is Thiamine-phosphate synthase of Chlamydia abortus (strain DSM 27085 / S26/3) (Chlamydophila abortus).